The following is a 1245-amino-acid chain: Structural polyprotein (1245 aa).

A disordered region spans residues 1–106 (MNRGFFNMLG…KPKPGKRQRM (106 aa)). The interval 37-70 (GLASQIQQLTTAVSALVIGQATRPQPPRPRPPPR) is host transcription inhibition. Positions 38 to 49 (LASQIQQLTTAV) are enriched in polar residues. A Nuclear localization signal motif is present at residues 63–100 (PRPRPPPRQKKQAPKQPPKPKKPKTQEKKKKQPAKPKP). Basic residues predominate over residues 67–106 (PPPRQKKQAPKQPPKPKKPKTQEKKKKQPAKPKPGKRQRM). The tract at residues 86 to 115 (KTQEKKKKQPAKPKPGKRQRMALKLEADRL) is binding to the viral RNA. The tract at residues 100–114 (PGKRQRMALKLEADR) is ribosome-binding. In terms of domain architecture, Peptidase S3 spans 114–264 (RLFDVKNEDG…KTTPEGTEEW (151 aa)). Histidine 141 functions as the Charge relay system in the catalytic mechanism. The Nuclear export signal motif lies at 146–156 (IDHPVLSKLKF). The segment at 157–162 (TKSSAY) is interaction with spike glycoprotein E2. Residue aspartate 163 is the Charge relay system of the active site. Positions 185–195 (PEGFYNWHHGA) are dimerization of the capsid protein. The active-site Charge relay system is the serine 215. A dimerization of the capsid protein region spans residues 221-225 (DNSGR). An interaction with spike glycoprotein E2 region spans residues 249–253 (SKGKT). The functions as an uncleaved signal peptide for the precursor of protein E3/E2 stretch occupies residues 265–279 (SAAPLVTAMCLLGNV). An N-linked (GlcNAc...) asparagine; by host glycan is attached at asparagine 278. 4 disulfide bridges follow: cysteine 283–cysteine 289, cysteine 480–cysteine 594, cysteine 529–cysteine 554, and cysteine 531–cysteine 548. Residues 329–690 (SVIDDFTLTS…HEIVQHYYHR (362 aa)) are Extracellular-facing. N-linked (GlcNAc...) asparagine; by host glycosylation is present at asparagine 524. The N-linked (GlcNAc...) asparagine; by host glycan is linked to asparagine 646. Residues 682–730 (EIVQHYYHRHPVYTILAVASATVAMMIGVTVAVLCACKARRECLTPYAL) adopt a coiled-coil conformation. The chain crosses the membrane as a helical span at residues 691–718 (HPVYTILAVASATVAMMIGVTVAVLCAC). The interaction with the capsid protein stretch occupies residues 719–723 (KARRE). The Cytoplasmic segment spans residues 719-751 (KARRECLTPYALAPNAVIPTSLALLCCVRSANA). Residues cysteine 724, cysteine 744, and cysteine 745 are each lipidated (S-palmitoyl cysteine; by host). Cysteine 724 and cysteine 745 are oxidised to a cystine. The Extracellular portion of the chain corresponds to 752–763 (ETFTETMSYLWS). Residues 764–784 (NSQPFFWVQLCIPLAAFIVLM) form a helical membrane-spanning segment. Position 785 (arginine 785) is a topological domain, cytoplasmic. Residues 786–806 (CCSCCLPFLVVAGAYLAKVDA) traverse the membrane as a helical segment. At 807 to 1214 (YEHATTVPNV…QAAISKTSWS (408 aa)) the chain is on the extracellular side. Disulfide bonds link cysteine 855-cysteine 920, cysteine 868-cysteine 900, cysteine 869-cysteine 902, and cysteine 874-cysteine 884. An E1 fusion peptide loop region spans residues 890 to 907 (VYPFMWGGAQCFCDSENS). 2 N-linked (GlcNAc...) asparagine; by host glycosylation sites follow: asparagine 945 and asparagine 1051. 4 disulfide bridges follow: cysteine 1065-cysteine 1077, cysteine 1107-cysteine 1182, cysteine 1112-cysteine 1186, and cysteine 1134-cysteine 1176. The stretch at 1196-1245 (TPHKNDQEFQAAISKTSWSWLFALFGGASSLLIIGLMIFACSMMLTSTRR) forms a coiled coil. The helical transmembrane segment at 1215–1239 (WLFALFGGASSLLIIGLMIFACSMM) threads the bilayer. Topologically, residues 1240–1245 (LTSTRR) are cytoplasmic.

This sequence belongs to the alphavirus structural polyprotein family. As to quaternary structure, homomultimer. Interacts with host karyopherin KPNA4; this interaction allows the nuclear import of the viral capsid protein. Interacts with spike glycoprotein E2. Interacts with host IRAK1; the interaction leads to inhibition of IRAK1-dependent signaling. The precursor of protein E3/E2 and E1 form a heterodimer shortly after synthesis. In terms of assembly, the precursor of protein E3/E2 and E1 form a heterodimer shortly after synthesis. Processing of the precursor of protein E3/E2 into E2 and E3 results in a heterodimer of the spike glycoproteins E2 and E1. Spike at virion surface are constituted of a trimer of E2-E1 heterodimers. After target cell attachment and endocytosis, E1 change conformation to form homotrimers. E2-E1 heterodimers interact with host VLDLR or LRP8/APOER2 to mediate viral entry. Interacts with 6K protein. As to quaternary structure, interacts with spike glycoprotein E1. Processing of the precursor of protein E3/E2 into E2 and E3 results in a heterodimer of the spike glycoproteins E2 and E1. Spike at virion surface are constituted of a trimer of E2-E1 heterodimers. E2-E1 heterodimers interact with host VLDLR or LRP8/APOER2 to mediate viral entry. Interacts with 6K protein. Interacts with the capsid protein. Oligomer. Interacts with spike glycoprotein E1. Interacts with spike glycoprotein E2. Specific enzymatic cleavages in vivo yield mature proteins. Capsid protein is auto-cleaved during polyprotein translation, unmasking a signal peptide at the N-terminus of the precursor of E3/E2. The remaining polyprotein is then targeted to the host endoplasmic reticulum, where host signal peptidase cleaves it into pE2, 6K and E1 proteins. pE2 is further processed to mature E3 and E2 by host furin in trans-Golgi vesicle. Post-translationally, palmitoylated via thioester bonds. These palmitoylations may induce disruption of the C-terminus transmembrane. This would result in the reorientation of E2 C-terminus from lumenal to cytoplasmic side. In terms of processing, N-glycosylated. Palmitoylated via thioester bonds.

It localises to the virion. Its subcellular location is the host cytoplasm. It is found in the host cell membrane. The protein localises to the host nucleus. The protein resides in the virion membrane. It localises to the host Golgi apparatus. Its subcellular location is the host trans-Golgi network. It is found in the host endoplasmic reticulum. It catalyses the reaction Autocatalytic release of the core protein from the N-terminus of the togavirus structural polyprotein by hydrolysis of a -Trp-|-Ser- bond.. With respect to regulation, the channel activity is blocked by 5-N, N-Hexamethylene amiloride. Forms an icosahedral capsid with a T=4 symmetry composed of 240 copies of the capsid protein surrounded by a lipid membrane through which penetrate 80 spikes composed of trimers of E1-E2 heterodimers. The capsid protein binds to the viral RNA genome at a site adjacent to a ribosome binding site for viral genome translation following genome release. Possesses a protease activity that results in its autocatalytic cleavage from the nascent structural protein. Following its self-cleavage, the capsid protein transiently associates with ribosomes, and within several minutes the protein binds to viral RNA and rapidly assembles into icosahedric core particles. The resulting nucleocapsid eventually associates with the cytoplasmic domain of the spike glycoprotein E2 at the cell membrane, leading to budding and formation of mature virions. In case of infection, new virions attach to target cells and after clathrin-mediated endocytosis their membrane fuses with the host endosomal membrane. This leads to the release of the nucleocapsid into the cytoplasm, followed by an uncoating event necessary for the genomic RNA to become accessible. The uncoating might be triggered by the interaction of capsid proteins with ribosomes. Binding of ribosomes would release the genomic RNA since the same region is genomic RNA-binding and ribosome-binding. Specifically inhibits interleukin-1 receptor-associated kinase 1/IRAK1-dependent signaling during viral entry, representing a means by which the alphaviruses may evade innate immune detection and activation prior to viral gene expression. In terms of biological role, provides the signal sequence for the translocation of the precursor of protein E3/E2 to the host endoplasmic reticulum. Furin-cleaved E3 remains associated with spike glycoprotein E1 and mediates pH protection of the latter during the transport via the secretory pathway. After virion release from the host cell, the assembly protein E3 is gradually released in the extracellular space. Its function is as follows. Plays a role in viral attachment to target host cell, by binding to the cell receptors VLDLR or LRP8/APOER2. Synthesized as a pE2 precursor which is processed by furin at the cell membrane just before virion budding, giving rise to E2-E1 heterodimer. The pE2-E1 heterodimer is stable, whereas E2-E1 is unstable and dissociate at low pH. pE2 is processed at the last step, presumably to avoid E1 fusion activation before its final export to cell surface. E2 C-terminus contains a transitory transmembrane that would be disrupted by palmitoylation, resulting in reorientation of the C-terminal tail from lumenal to cytoplasmic side. This step is critical since E2 C-terminus is involved in budding by interacting with capsid proteins. This release of E2 C-terminus in cytoplasm occurs lately in protein export, and precludes premature assembly of particles at the endoplasmic reticulum membrane. Functionally, acts as a viroporin that participates in virus glycoprotein processing and transport to the plasma membrane, cell permeabilization and budding of viral particles. Disrupts the calcium homeostasis of the cell, probably at the endoplasmic reticulum level resulting in the increased levels of cytoplasmic calcium. Because of its lipophilic properties, the 6K protein is postulated to influence the selection of lipids that interact with the transmembrane domains of the glycoproteins, which, in turn, affects the deformability of the bilayer required for the extreme curvature that occurs as budding proceeds. Present in low amount in virions, about 3% compared to viral glycoproteins. Class II viral fusion protein. Fusion activity is inactive as long as E1 is bound to E2 in mature virion. After virus attachment to target cell via host VLDLR or LRP8/APOER2 and endocytosis, acidification of the endosome induces dissociation of E1/E2 heterodimer and concomitant trimerization of the E1 subunits. This E1 trimer is fusion active, and promotes release of viral nucleocapsid in cytoplasm after endosome and viral membrane fusion. Efficient fusion requires the presence of cholesterol and sphingolipid in the target membrane. The chain is Structural polyprotein from Acrocephalus scirpaceus (Eurasian reed-warbler).